The chain runs to 310 residues: MYEIKQPFHSGYLQVSEIHQIYWEESGNPDGVPVIFLHGGPGAGASPECRGFFNPDVFRIVIIDQRGCGRSHPYACAEDNTTWDLVADIEKVREMLGIGKWLVFGGSWGSTLSLAYAQTHPERVKGLVLRGIFLCRPSETAWLNEAGGVSRIYPEQWQKFVAPIAENRRNRLIEAYHGLLFHQDEEVCLSAAKAWADWESYLIRFEPEGVDEDAYASLAIARLENHYFVNGGWLQGDKAILNNIGKIRHIPTVIVQGRYDLCTPMQSAWELSKAFPEAELRVVQAGHCAFDPPLADALVQAVEDILPRLL.

Residues 33–290 (PVIFLHGGPG…RVVQAGHCAF (258 aa)) enclose the AB hydrolase-1 domain. Ser-107 acts as the Nucleophile in catalysis. Residue Asp-260 is part of the active site. The Proton donor role is filled by His-287.

This sequence belongs to the peptidase S33 family.

It is found in the cytoplasm. The catalysed reaction is Release of N-terminal proline from a peptide.. Its function is as follows. Hydrolyzes peptides having the structure Pro-Y-Z to yield free proline. Also hydrolyzes the dipeptide Pro-Gly. The protein is Proline iminopeptidase (pip) of Neisseria gonorrhoeae.